A 58-amino-acid polypeptide reads, in one-letter code: Photosystem II reaction center protein K (58 aa).

Positions 1–21 (MLNMISTFFDSSSNFSEAFLA) are excised as a propeptide. The helical transmembrane segment at 29 to 49 (IFDPIVDVMPIIPVFFLLLAF) threads the bilayer.

The protein belongs to the PsbK family. In terms of assembly, PSII is composed of 1 copy each of membrane proteins PsbA, PsbB, PsbC, PsbD, PsbE, PsbF, PsbH, PsbI, PsbJ, PsbK, PsbL, PsbM, PsbT, PsbX, PsbY, PsbZ, Psb30/Ycf12, at least 3 peripheral proteins of the oxygen-evolving complex and a large number of cofactors. It forms dimeric complexes.

The protein resides in the plastid. It localises to the chloroplast thylakoid membrane. Functionally, one of the components of the core complex of photosystem II (PSII). PSII is a light-driven water:plastoquinone oxidoreductase that uses light energy to abstract electrons from H(2)O, generating O(2) and a proton gradient subsequently used for ATP formation. It consists of a core antenna complex that captures photons, and an electron transfer chain that converts photonic excitation into a charge separation. This Chaetosphaeridium globosum (Charophycean green alga) protein is Photosystem II reaction center protein K.